A 557-amino-acid chain; its full sequence is 2-isopropylmalate synthase (557 aa).

The Pyruvate carboxyltransferase domain maps to 33 to 307 (PIWCSSDLRD…DPQLDFSDID (275 aa)). The Mg(2+) site is built by aspartate 42, histidine 246, histidine 248, and asparagine 282. The tract at residues 439 to 557 (ANAPYALVSH…SLSQQEAKAA (119 aa)) is regulatory domain.

Belongs to the alpha-IPM synthase/homocitrate synthase family. LeuA type 2 subfamily. As to quaternary structure, homodimer. Requires Mg(2+) as cofactor.

The protein localises to the cytoplasm. The enzyme catalyses 3-methyl-2-oxobutanoate + acetyl-CoA + H2O = (2S)-2-isopropylmalate + CoA + H(+). Its pathway is amino-acid biosynthesis; L-leucine biosynthesis; L-leucine from 3-methyl-2-oxobutanoate: step 1/4. Catalyzes the condensation of the acetyl group of acetyl-CoA with 3-methyl-2-oxobutanoate (2-ketoisovalerate) to form 3-carboxy-3-hydroxy-4-methylpentanoate (2-isopropylmalate). In Pseudomonas putida (strain GB-1), this protein is 2-isopropylmalate synthase.